Reading from the N-terminus, the 121-residue chain is U15-barytoxin-Tl1b (121 aa).

Positions 1 to 16 are cleaved as a signal peptide; sequence MKLFMVLVASFAFAVA. 4 disulfides stabilise this stretch: Cys54–Cys72, Cys65–Cys78, Cys69–Cys119, and Cys71–Cys90.

This sequence belongs to the neurotoxin 03 (Tx2) family. 03 subfamily. Expressed by the venom gland.

Its subcellular location is the secreted. Functionally, ion channel inhibitor. This is U15-barytoxin-Tl1b from Trittame loki (Brush-footed trapdoor spider).